The chain runs to 223 residues: Nicotinamide/nicotinic acid mononucleotide adenylyltransferase 2 (223 aa).

Positions 11 and 12 each coordinate NAD(+). H19 contributes to the ATP binding site. Residues W87, T90, G116, D118, L133, W134, and R153 each coordinate NAD(+). 190-191 (TR) provides a ligand contact to ATP.

The protein belongs to the eukaryotic NMN adenylyltransferase family. It depends on a divalent metal cation as a cofactor.

The enzyme catalyses beta-nicotinamide D-ribonucleotide + ATP + H(+) = diphosphate + NAD(+). The catalysed reaction is nicotinate beta-D-ribonucleotide + ATP + H(+) = deamido-NAD(+) + diphosphate. Its pathway is cofactor biosynthesis; NAD(+) biosynthesis; deamido-NAD(+) from nicotinate D-ribonucleotide: step 1/1. The protein operates within cofactor biosynthesis; NAD(+) biosynthesis; NAD(+) from nicotinamide D-ribonucleotide: step 1/1. In terms of biological role, catalyzes the formation of NAD(+) from nicotinamide mononucleotide (NMN) and ATP. Can also use the deamidated form; nicotinic acid mononucleotide (NaMN) as substrate. The polypeptide is Nicotinamide/nicotinic acid mononucleotide adenylyltransferase 2 (Caenorhabditis elegans).